We begin with the raw amino-acid sequence, 360 residues long: Peptide chain release factor 1 (360 aa).

Gln-235 is modified (N5-methylglutamine).

It belongs to the prokaryotic/mitochondrial release factor family. Post-translationally, methylated by PrmC. Methylation increases the termination efficiency of RF1.

It is found in the cytoplasm. Functionally, peptide chain release factor 1 directs the termination of translation in response to the peptide chain termination codons UAG and UAA. This is Peptide chain release factor 1 from Bordetella parapertussis (strain 12822 / ATCC BAA-587 / NCTC 13253).